A 277-amino-acid chain; its full sequence is Adenylate kinase (277 aa).

53–58 (GAGKGT) lines the ATP pocket. An NMP region spans residues 73–102 (ATGDMLRAQVAAKTPLGREAKKIMDAGGLV). AMP contacts are provided by residues T74, R79, 100-102 (GLV), 129-132 (GFPR), and Q136. Positions 170–207 (GRLVHPASGRSYHKIFNPPKAPMTDDATGEPLIQRSDD) are LID. ATP contacts are provided by residues R171 and 180–181 (SY). AMP is bound by residues R204 and R215. Q243 is an ATP binding site.

Belongs to the adenylate kinase family. AK2 subfamily. Monomer.

The protein resides in the cytoplasm. The protein localises to the cytosol. It is found in the mitochondrion intermembrane space. It catalyses the reaction AMP + ATP = 2 ADP. In terms of biological role, catalyzes the reversible transfer of the terminal phosphate group between ATP and AMP. Plays an important role in cellular energy homeostasis and in adenine nucleotide metabolism. Adenylate kinase activity is critical for regulation of the phosphate utilization and the AMP de novo biosynthesis pathways. The chain is Adenylate kinase from Phaeosphaeria nodorum (strain SN15 / ATCC MYA-4574 / FGSC 10173) (Glume blotch fungus).